The sequence spans 1228 residues: DNA-directed RNA polymerase subunit beta (1228 aa).

The interval 1175–1204 is disordered; the sequence is ESVDEDEQPQGLGAFEIGGDEIEEDKEDDK. Residues 1192–1202 show a composition bias toward acidic residues; it reads GGDEIEEDKED.

The protein belongs to the RNA polymerase beta chain family. As to quaternary structure, the RNAP catalytic core consists of 2 alpha, 1 beta, 1 beta' and 1 omega subunit. When a sigma factor is associated with the core the holoenzyme is formed, which can initiate transcription.

It carries out the reaction RNA(n) + a ribonucleoside 5'-triphosphate = RNA(n+1) + diphosphate. Functionally, DNA-dependent RNA polymerase catalyzes the transcription of DNA into RNA using the four ribonucleoside triphosphates as substrates. This Caldicellulosiruptor bescii (strain ATCC BAA-1888 / DSM 6725 / KCTC 15123 / Z-1320) (Anaerocellum thermophilum) protein is DNA-directed RNA polymerase subunit beta.